A 138-amino-acid chain; its full sequence is MLSPKRTKFRRHHRGRMKGISSRGNFIAFGKFALQALEPSWITSRQIEAGRRAMTRYARRGGKIWIRIFPDKPVTMRAAETRMGSGKGSPEFWVAVVKPGRILYEMSGVSESIAKSAMRIAAFKMPIKTQFLVKKDKV.

It belongs to the universal ribosomal protein uL16 family. Part of the 50S ribosomal subunit.

It is found in the plastid. The protein resides in the chloroplast. This Chaetosphaeridium globosum (Charophycean green alga) protein is Large ribosomal subunit protein uL16c.